The following is a 295-amino-acid chain: F-box only protein 8 (295 aa).

One can recognise an F-box domain in the interval 35 to 80; that stretch reads TWVARYIPQDLLIEILTRLPPKSVMRFKCVSKFWSSLLSSRYFCNR.

This chain is F-box only protein 8 (FBX8), found in Arabidopsis thaliana (Mouse-ear cress).